Here is a 454-residue protein sequence, read N- to C-terminus: Dihydrolipoyllysine-residue succinyltransferase component of 2-oxoglutarate dehydrogenase complex, mitochondrial (454 aa).

The transit peptide at 1–68 (MLSRSRCVSR…RFFQTTAVCK (68 aa)) directs the protein to the mitochondrion. Positions 71–145 (VITVQTPAFA…EGGTPLFTLR (75 aa)) constitute a Lipoyl-binding domain. Ser-82 carries the post-translational modification Phosphoserine. Lys-111 bears the N6-lipoyllysine mark. The interval 147-227 (TGAAPAKAKP…KGLRSEHREK (81 aa)) is disordered. Residues 149–163 (AAPAKAKPAETPAPA) are compositionally biased toward low complexity. N6-acetyllysine is present on Lys-155. The segment covering 186 to 197 (PPVPSPSQPPSS) has biased composition (pro residues). The segment covering 198 to 217 (KPVSAIKPTAAPPLAEAGAA) has biased composition (low complexity). N6-acetyllysine occurs at positions 268, 273, 274, 278, and 308. Residues His-425 and Asp-429 contribute to the active site.

This sequence belongs to the 2-oxoacid dehydrogenase family. In terms of assembly, the 2-oxoglutarate dehydrogenase complex is composed of OGDH (2-oxoglutarate dehydrogenase; E1), DLST (dihydrolipoamide succinyltransferase; E2), DLD (dihydrolipoamide dehydrogenase; E3) and the assembly factor KGD4. It contains multiple copies of the three enzymatic components (E1, E2 and E3). In the nucleus, the 2-oxoglutarate dehydrogenase complex associates with KAT2A. Interacts with ABHD11; this interaction maintains the functional lipoylation of the 2-oxoglutarate dehydrogenase complex. The cofactor is (R)-lipoate.

It localises to the mitochondrion matrix. The protein localises to the nucleus. The catalysed reaction is N(6)-[(R)-dihydrolipoyl]-L-lysyl-[protein] + succinyl-CoA = N(6)-[(R)-S(8)-succinyldihydrolipoyl]-L-lysyl-[protein] + CoA. Its pathway is amino-acid degradation; L-lysine degradation via saccharopine pathway; glutaryl-CoA from L-lysine: step 6/6. It functions in the pathway carbohydrate metabolism; tricarboxylic acid cycle. Dihydrolipoamide succinyltransferase (E2) component of the 2-oxoglutarate dehydrogenase complex. The 2-oxoglutarate dehydrogenase complex catalyzes the overall conversion of 2-oxoglutarate to succinyl-CoA and CO(2). The 2-oxoglutarate dehydrogenase complex is mainly active in the mitochondrion. A fraction of the 2-oxoglutarate dehydrogenase complex also localizes in the nucleus and is required for lysine succinylation of histones: associates with KAT2A on chromatin and provides succinyl-CoA to histone succinyltransferase KAT2A. In Mus musculus (Mouse), this protein is Dihydrolipoyllysine-residue succinyltransferase component of 2-oxoglutarate dehydrogenase complex, mitochondrial.